The primary structure comprises 233 residues: Phosphoribosylformylglycinamidine synthase subunit PurQ (233 aa).

Positions 3 to 233 (SAVLVFPGIN…GLVEHLKTAA (231 aa)) constitute a Glutamine amidotransferase type-1 domain. The active-site Nucleophile is Cys-87. Residues His-204 and Glu-206 contribute to the active site.

As to quaternary structure, part of the FGAM synthase complex composed of 1 PurL, 1 PurQ and 2 PurS subunits.

It is found in the cytoplasm. The enzyme catalyses N(2)-formyl-N(1)-(5-phospho-beta-D-ribosyl)glycinamide + L-glutamine + ATP + H2O = 2-formamido-N(1)-(5-O-phospho-beta-D-ribosyl)acetamidine + L-glutamate + ADP + phosphate + H(+). The catalysed reaction is L-glutamine + H2O = L-glutamate + NH4(+). It functions in the pathway purine metabolism; IMP biosynthesis via de novo pathway; 5-amino-1-(5-phospho-D-ribosyl)imidazole from N(2)-formyl-N(1)-(5-phospho-D-ribosyl)glycinamide: step 1/2. In terms of biological role, part of the phosphoribosylformylglycinamidine synthase complex involved in the purines biosynthetic pathway. Catalyzes the ATP-dependent conversion of formylglycinamide ribonucleotide (FGAR) and glutamine to yield formylglycinamidine ribonucleotide (FGAM) and glutamate. The FGAM synthase complex is composed of three subunits. PurQ produces an ammonia molecule by converting glutamine to glutamate. PurL transfers the ammonia molecule to FGAR to form FGAM in an ATP-dependent manner. PurS interacts with PurQ and PurL and is thought to assist in the transfer of the ammonia molecule from PurQ to PurL. This is Phosphoribosylformylglycinamidine synthase subunit PurQ from Rhodopseudomonas palustris (strain HaA2).